The sequence spans 299 residues: Adenylate kinase (299 aa).

The tract at residues 1–30 is disordered; that stretch reads MATTTTRGARDSPFPAPSEGEIKKELNMKG. 85-90 contributes to the ATP binding site; that stretch reads GAGKGT. An NMP region spans residues 107 to 136; it reads ATGDMLREQVSKQTELGKMAKKIMDQGGLV. AMP is bound by residues threonine 108, arginine 113, 134 to 136, 163 to 166, and glutamine 170; these read GLV and GFPR. The tract at residues 204-241 is LID; sequence GRLVHPASGRSYHKEFSPPKKPMTDDVTGEPLIQRSDD. ATP-binding positions include arginine 205 and 214 to 215; that span reads SY. Residues 212–237 are disordered; sequence GRSYHKEFSPPKKPMTDDVTGEPLIQ. Positions 215-227 are enriched in basic and acidic residues; it reads YHKEFSPPKKPMT. Positions 238 and 249 each coordinate AMP. Glutamine 277 contacts ATP.

It belongs to the adenylate kinase family. AK2 subfamily. As to quaternary structure, monomer.

The protein localises to the cytoplasm. The protein resides in the cytosol. It is found in the mitochondrion intermembrane space. The catalysed reaction is AMP + ATP = 2 ADP. Its function is as follows. Catalyzes the reversible transfer of the terminal phosphate group between ATP and AMP. Plays an important role in cellular energy homeostasis and in adenine nucleotide metabolism. Adenylate kinase activity is critical for regulation of the phosphate utilization and the AMP de novo biosynthesis pathways. This chain is Adenylate kinase, found in Mycosarcoma maydis (Corn smut fungus).